The sequence spans 586 residues: Asparagine synthetase, nodule [glutamine-hydrolyzing] (586 aa).

Cys-2 serves as the catalytic For GATase activity. The Glutamine amidotransferase type-2 domain maps to 2–185 (CGILAVLGCS…PGHLYSSKER (184 aa)). Residues 50–54 (RLAIV), 75–77 (NGE), and Asp-98 each bind L-glutamine. The 325-residue stretch at 193–517 (PPWFNEAIIP…PQNSARLTVP (325 aa)) folds into the Asparagine synthetase domain. Residues Leu-232, Val-268, and 342 to 343 (SG) each bind ATP.

Root nodules.

The enzyme catalyses L-aspartate + L-glutamine + ATP + H2O = L-asparagine + L-glutamate + AMP + diphosphate + H(+). Its pathway is amino-acid biosynthesis; L-asparagine biosynthesis; L-asparagine from L-aspartate (L-Gln route): step 1/1. The sequence is that of Asparagine synthetase, nodule [glutamine-hydrolyzing] (AS1) from Pisum sativum (Garden pea).